Consider the following 292-residue polypeptide: ATP synthase gamma chain (292 aa).

Belongs to the ATPase gamma chain family. As to quaternary structure, F-type ATPases have 2 components, CF(1) - the catalytic core - and CF(0) - the membrane proton channel. CF(1) has five subunits: alpha(3), beta(3), gamma(1), delta(1), epsilon(1). CF(0) has three main subunits: a, b and c.

The protein localises to the cell membrane. In terms of biological role, produces ATP from ADP in the presence of a proton gradient across the membrane. The gamma chain is believed to be important in regulating ATPase activity and the flow of protons through the CF(0) complex. This is ATP synthase gamma chain from Streptococcus pneumoniae (strain JJA).